A 587-amino-acid polypeptide reads, in one-letter code: A-type ATP synthase subunit A (587 aa).

Gly234–Thr241 contributes to the ATP binding site.

The protein belongs to the ATPase alpha/beta chains family. In terms of assembly, the N-terminus (approximately residues 106-122) interacts with subunit H. Has multiple subunits with at least A(3), B(3), C, D, E(1 or 2), F, H(2), I and proteolipid K(x).

Its subcellular location is the cell membrane. It catalyses the reaction ATP + H2O + 4 H(+)(in) = ADP + phosphate + 5 H(+)(out). With respect to regulation, ATP hydrolysis is inhibited by N',N'-dicyclohexylcarbodiimide. In terms of biological role, component of the A-type ATP synthase that produces ATP from ADP in the presence of a proton gradient across the membrane. The A chain is the catalytic subunit. Hydrolyzes ATP, GTP (86% of ATPase rate) and UTP (54% of ATPase rate), has very poor activity on CTP. The polypeptide is A-type ATP synthase subunit A (Methanocaldococcus jannaschii (strain ATCC 43067 / DSM 2661 / JAL-1 / JCM 10045 / NBRC 100440) (Methanococcus jannaschii)).